The primary structure comprises 338 residues: MIRVAINGYGRIGRSVLRALYESGKRGQMQLVAINELAKPEAIVHLTNYDTTHGRFHTRASLDEGMMHLGNDAIRLLAIEDAAALPWQALDVDLVFECTGALNDRQSAEAHITAGARKVLISHPSSADVDATIVYGVNDASLKATDTVVSNASCTTNCLVPVIDVLDRHFGVKSGAITTIHSAMNDQQVIDAYHDDLRRTRAASQSIIPVDTKLARGIERILPQMKDKFEAISVRVPTINVTAIDLSVTLDTRVDIATVNAALKAAADGSASGILGYTDEPLVSCDFNHDPRSSVVDGTQTRVSAGHLVKMLLWCDNEWGFANRMLDTALAMAATQAE.

Position 11–12 (11–12 (RI)) interacts with NAD(+). Residues 153-155 (SCT), arginine 199, 212-213 (TK), and arginine 235 each bind substrate. Residue cysteine 154 is the Nucleophile of the active site. Asparagine 317 serves as a coordination point for NAD(+).

The protein belongs to the glyceraldehyde-3-phosphate dehydrogenase family. Epd subfamily. In terms of assembly, homotetramer.

It localises to the cytoplasm. The enzyme catalyses D-erythrose 4-phosphate + NAD(+) + H2O = 4-phospho-D-erythronate + NADH + 2 H(+). Its pathway is cofactor biosynthesis; pyridoxine 5'-phosphate biosynthesis; pyridoxine 5'-phosphate from D-erythrose 4-phosphate: step 1/5. In terms of biological role, catalyzes the NAD-dependent conversion of D-erythrose 4-phosphate to 4-phosphoerythronate. This Shewanella amazonensis (strain ATCC BAA-1098 / SB2B) protein is D-erythrose-4-phosphate dehydrogenase.